The sequence spans 101 residues: Thioredoxin 1 (101 aa).

One can recognise a Thioredoxin domain in the interval 2-101 (AQTLDDLIRT…MRQEVLKAIG (100 aa)). A disulfide bridge connects residues Cys-25 and Cys-28.

The protein belongs to the thioredoxin family.

Participates in various redox reactions through the reversible oxidation of its active center dithiol to a disulfide and catalyzes dithiol-disulfide exchange reactions. This chain is Thioredoxin 1 (trx1), found in Chlorobaculum tepidum (strain ATCC 49652 / DSM 12025 / NBRC 103806 / TLS) (Chlorobium tepidum).